A 216-amino-acid chain; its full sequence is MEFTDLLPCTVVERVNRFLVNVKLNDKIVEAHLHDPGRLKEIIYTGNKVLVRRKSGKKTGYRITFGLREDQYILIDSGLHSQIASHFVSQECKPEVKIDDRRLDFACNDIFIEVKGCTLSIDGVAIFPDAPTLRGYEHLRLLERLAQEGKGAYVLFLIFSDATSFRPNSETDPRFSDEFYKALKNGVKFSFKRFSFDGKYLKYSGDILTFDGDDKS.

Belongs to the SfsA family.

The sequence is that of Sugar fermentation stimulation protein homolog from Thermoplasma volcanium (strain ATCC 51530 / DSM 4299 / JCM 9571 / NBRC 15438 / GSS1).